A 541-amino-acid polypeptide reads, in one-letter code: Atlastin (541 aa).

Residues 1–424 (MGGSAVQVIN…NIFKAARTPA (424 aa)) are Cytoplasmic-facing. In terms of domain architecture, GB1/RHD3-type G spans 35–284 (DRFVCVVSVA…LVPMLLAPDN (250 aa)). Arginine 48, lysine 49, glycine 50, lysine 51, and serine 52 together coordinate GDP. Arginine 48, lysine 49, glycine 50, lysine 51, serine 52, and phenylalanine 53 together coordinate GTP. Serine 52 serves as a coordination point for Mg(2+). Aspartate 121 provides a ligand contact to Mg(2+). GDP is bound by residues arginine 192, aspartate 193, and valine 251. Positions 192, 193, and 251 each coordinate GTP. The 3HB (three-helix bundle) domain stretch occupies residues 322–413 (MLVATAEANH…FTNYQAHNES (92 aa)). Positions 414–422 (KNIFKAART) are linker. Residues 425–445 (VYFACAVIMYILSGIFGLVGL) traverse the membrane as a helical segment. Topologically, residues 446-448 (YTF) are lumenal. The helical transmembrane segment at 449–469 (ANFCNLVMGVALLTLALWAYI) threads the bilayer. Over 470–541 (RYSGELSDFG…NASNGKVKRS (72 aa)) the chain is Cytoplasmic. Threonine 514 is modified (phosphothreonine).

The protein belongs to the TRAFAC class dynamin-like GTPase superfamily. GB1/RHD3 GTPase family. GB1 subfamily. Monomeric and homodimeric. The homodimer, transiently formed by two molecules on opposing membranes, is the active form mediating ER membrane fusion. Interacts with spas; interaction may regulate microtubule dynamics. Ubiquitously expressed.

The protein localises to the endoplasmic reticulum membrane. Its subcellular location is the golgi apparatus membrane. The catalysed reaction is GTP + H2O = GDP + phosphate + H(+). Membrane-anchored GTPase that mediates the GTP-dependent fusion of endoplasmic reticulum (ER) membranes, maintaining the continuous ER network. It facilitates the formation of three-way junctions where ER tubules intersect. Two atlastin-1 on neighboring ER tubules bind GTP and form loose homodimers through the GB1/RHD3-type G domains and 3HB regions. Upon GTP hydrolysis, the 3HB regions tighten, pulling the membranes together to drive their fusion. After fusion, the homodimer disassembles upon release of inorganic phosphate (Pi). Subsequently, GDP dissociates, resetting the monomers to a conformation ready for a new fusion cycle. May also regulate more or less directly Golgi biogenesis. May also regulate microtubule polymerization and Golgi biogenesis. Required for dopaminergic neurons survival and the growth of muscles and synapses at neuromuscular junctions. This chain is Atlastin (atl), found in Drosophila melanogaster (Fruit fly).